Consider the following 287-residue polypeptide: MSTASQHLYKRRRLINATAITISCIAALFGLFFLIWILWTLISKGLPGIGLDLFTKITPPPMQKGGLANAFFGSAIMCLLAIVIGTPLGIAAGTWLAEYGNTSKTSAVVRFVNDILLSAPSIVLGLFVYTLYVMHTGGHFSAFSGALALVFIVLPIVVRTTDEMLRLVPGQMREAALSLGIPQWKMIIQVLYRSASAGILTGILLALARISGETAPLLFTAFGNQYWSSNIFQPIASLPLVMNQFASSPYKSWQLLAWSGALVLTVFVLLVSLGARTLLLRNKIPNE.

6 consecutive transmembrane segments (helical) span residues 22 to 42 (ISCI…WTLI), 70 to 90 (AFFG…PLGI), 115 to 135 (ILLS…YVMH), 138 to 158 (GHFS…PIVV), 187 to 207 (IIQV…LLAL), and 255 to 275 (LLAW…SLGA). The ABC transmembrane type-1 domain maps to 71–275 (FFGSAIMCLL…VFVLLVSLGA (205 aa)).

Belongs to the binding-protein-dependent transport system permease family. CysTW subfamily.

It is found in the cell inner membrane. Functionally, part of a binding-protein-dependent transport system for phosphate; probably responsible for the translocation of the substrate across the membrane. The sequence is that of Phosphate transport system permease protein PstA (pstA) from Xylella fastidiosa (strain 9a5c).